The chain runs to 317 residues: Bile salt hydrolase/transferase (317 aa).

Cys2 acts as the Nucleophile; acyl-thioester intermediate in catalysis. Residues Cys2 and Arg18 each contribute to the deoxycholate site. Asn82 serves as a coordination point for taurine.

The protein belongs to the peptidase C59 family. Homotetramer. The tetramer consists of a dimer of dimers.

The catalysed reaction is glycocholate + H2O = cholate + glycine. The enzyme catalyses glycodeoxycholate + H2O = deoxycholate + glycine. It carries out the reaction chenodeoxycholate + glycine = glycochenodeoxycholate + H2O. It catalyses the reaction cholate + taurine = taurocholate + H2O. The catalysed reaction is taurodeoxycholate + H2O = deoxycholate + taurine. The enzyme catalyses taurochenodeoxycholate + H2O = chenodeoxycholate + taurine. It carries out the reaction an L-alpha-amino acid + cholate = an N-choloyl-L-alpha-amino acid + H2O. It catalyses the reaction an L-alpha-amino acid + taurocholate = an N-choloyl-L-alpha-amino acid + taurine. The catalysed reaction is cholate + L-alanine = L-alanocholate + H2O. The enzyme catalyses taurocholate + L-alanine = L-alanocholate + taurine. It carries out the reaction cholate + L-serine = L-serocholate + H2O. It catalyses the reaction taurocholate + L-serine = L-serocholate + taurine. The catalysed reaction is cholate + L-histidine = L-histidocholate + H2O. The enzyme catalyses taurocholate + L-histidine = L-histidocholate + taurine. Its pathway is lipid metabolism; bile acid biosynthesis. With respect to regulation, hydrolase activity is competitively inhibited by the products cholate (CA) and deoxycholate (DCA), and by phenylacetate and 4-aminophenylacetate. Penicillin V and penicillin G show mixed inhibition. Strongly inhibited by thiol enzyme inhibitors in vitro. In terms of biological role, possesses dual functions in bile acid metabolism. Acts as a bile salt hydrolase that catalyzes the deconjugation of glycine- and taurine-linked bile salts, which occurs naturally in the intestines of humans, releasing amino acid residues and deconjugated bile salts (bile acids). Can hydrolyze the amide bond in all six major human conjugated bile salts, namely glycocholate (GCA), glycodeoxycholate (GDCA), glycochenodeoxycholate (GCDCA), taurocholate (TCA), taurodeoxycholate (TDCA) and taurochenodeoxycholate (TCDCA). Shows a slight preference for glycine-conjugated bile acids as substrates. Also acts as an amine N-acyltransferase that conjugates a wide variety of amino acids to conjugated and non-conjugated bile acids, thus producing bacterial bile acid amidates (BBAAs) - also named microbially conjugated bile acids (MCBAs) - in the gastrointestinal tract. These BBAAs may facilitate communication between the microbiota and host through the activation of human ligand-activated transcription factors. Is totally inactive toward penicillin V. The sequence is that of Bile salt hydrolase/transferase from Bifidobacterium longum.